Here is a 497-residue protein sequence, read N- to C-terminus: Protein adenylyltransferase Fic (497 aa).

Residues 1 to 30 are disordered; that stretch reads MGATDQALEAESKTTEPPKTPPVPEQHDRP. Residues 38–58 traverse the membrane as a helical segment; the sequence is LCHLLVLLFSGGLAAITLHIF. 2 TPR repeats span residues 123–156 and 157–191; these read ALGA…APRH and PTVL…SPSN. Positions 248–253 match the Inhibitory (S/T)XXXE(G/N) motif motif; that stretch reads TVGIEG. Residues Glu-252 and 333 to 336 contribute to the ATP site; that span reads VGGH. The 136-residue stretch at 302 to 437 folds into the Fido domain; that stretch reads ITIKDILELH…IRPFVRFIAD (136 aa). The active site involves His-380. Residues 384-391, 416-417, and Asn-424 contribute to the ATP site; these read DGNGRTSR and YY. A disordered region spans residues 468-497; that stretch reads GEGVPQLQSSQMGGGASIPEFHESGSGSLP.

The protein belongs to the fic family. In terms of assembly, homodimer.

The protein localises to the membrane. It carries out the reaction L-tyrosyl-[protein] + ATP = O-(5'-adenylyl)-L-tyrosyl-[protein] + diphosphate. The catalysed reaction is L-threonyl-[protein] + ATP = 3-O-(5'-adenylyl)-L-threonyl-[protein] + diphosphate. The enzyme catalyses 3-O-(5'-adenylyl)-L-threonyl-[protein] + H2O = L-threonyl-[protein] + AMP + H(+). Its activity is regulated as follows. The side chain of Glu-252 determines which of the two opposing activities (AMPylase or de-AMPylase) will take place. In response to endoplasmic reticulum stress, mediates de-AMPylase activity. Adenylyltransferase activity is inhibited by the inhibitory helix present at the N-terminus: Glu-252 binds ATP and competes with ATP-binding at Arg-391, thereby preventing adenylyltransferase activity. In unstressed cells, disengagement of Glu-252 promotes adenylyltransferase activity. Activation dissociates ATP-binding from Glu-252, allowing ordered binding of the entire ATP moiety with the alpha-phosphate in an orientation that is productive for accepting an incoming target hydroxyl side chain. Functionally, protein that can both mediate the addition of adenosine 5'-monophosphate (AMP) to specific residues of target proteins (AMPylation), and the removal of the same modification from target proteins (de-AMPylation), depending on the context. The side chain of Glu-252 determines which of the two opposing activities (AMPylase or de-AMPylase) will take place. Acts as a key regulator of the unfolded protein response (UPR) by mediating AMPylation or de-AMPylation of Hsc70-3/BiP. In unstressed cells, acts as an adenylyltransferase by mediating AMPylation of Hsc70-3/BiP at 'Thr-518', thereby inactivating it. In response to endoplasmic reticulum stress, acts as a phosphodiesterase by mediating removal of ATP (de-AMPylation) from Hsc70-3/BiP at 'Thr-518', leading to restore HSPA5/BiP activity. This is Protein adenylyltransferase Fic from Drosophila ananassae (Fruit fly).